The chain runs to 144 residues: Large ribosomal subunit protein uL16 (144 aa).

The span at 1-16 shows a compositional bias: basic residues; sequence MLQPKKTKFRRQQKGR. The interval 1–22 is disordered; sequence MLQPKKTKFRRQQKGRMKGEAQ.

The protein belongs to the universal ribosomal protein uL16 family. As to quaternary structure, part of the 50S ribosomal subunit.

Functionally, binds 23S rRNA and is also seen to make contacts with the A and possibly P site tRNAs. The sequence is that of Large ribosomal subunit protein uL16 from Parabacteroides distasonis (strain ATCC 8503 / DSM 20701 / CIP 104284 / JCM 5825 / NCTC 11152).